A 265-amino-acid chain; its full sequence is Putative 2-aminoethylphosphonate transport system permease protein PhnV (265 aa).

A run of 6 helical transmembrane segments spans residues 13–33, 69–89, 104–124, 131–151, 185–205, and 233–253; these read GVVA…VILM, LTIG…AALA, VFYL…LVAF, MNGT…AFTF, LPLL…LSMG, and NIAD…LLMM. Positions 65–253 constitute an ABC transmembrane type-1 domain; sequence LLASLTIGFC…LVAITLLLMM (189 aa).

It belongs to the binding-protein-dependent transport system permease family.

Its subcellular location is the cell inner membrane. Its function is as follows. Probably part of the PhnSTUV complex (TC 3.A.1.11.5) involved in 2-aminoethylphosphonate import. Probably responsible for the translocation of the substrate across the membrane. The protein is Putative 2-aminoethylphosphonate transport system permease protein PhnV (phnV) of Salmonella typhimurium (strain LT2 / SGSC1412 / ATCC 700720).